Consider the following 481-residue polypeptide: MDNQAVSALWSCASATCLSLDAKRHSIEPNPDGQASPDVNNNNNNHNKSTTTVDAHSRKLRHIAHTPRGSCFMALLLLLLLALNFRHAHSCGPGRGLGRRRERNLFPLVLKQTVPNLSEYHNSASGPLEGAIQRDSPKFKNLVLNYNRDIEFRDEEGTGADRVMSKRCREKLNMLAYSVMNEWPGVRLRVTESWDEDRQHGQESLHYEGRAVTIATSDHDQSKYGMLARLAVEAGFDWVSYVSRRHIYCSVKSDSSPSISHMHGCFTPESTALLESGAEKALGELAIGDRVLSMDVKGQPVYSEVILFMDRNLEQVENFVQLHTDGGAVLTVTPAHLISVWQPERQTLNFIFADRVEELDYVLVRDATGELQPQRVLRLGSVQSRGVVAPLTREGTIVVNSVAASCYAVISSQSLAHWGLAPMRLLSTLQSWMPAKGQLRTAQDKSTPKDATAQQQNGLHWYANALYKVKDYVLPKSWRHD.

The first 19 residues, 1-19 (MDNQAVSALWSCASATCLS), serve as a signal peptide directing secretion. The propeptide occupies 20 to 90 (LDAKRHSIEP…LALNFRHAHS (71 aa)). The segment at 26-56 (SIEPNPDGQASPDVNNNNNNHNKSTTTVDAH) is disordered. Cys91 carries the N-palmitoyl cysteine lipid modification. 7 residues coordinate Ca(2+): Glu155, Glu156, Asp161, Thr191, Glu192, Asp195, and Asp197. Gly264 is lipidated: Cholesterol glycine ester.

The protein belongs to the hedgehog family. As to quaternary structure, interacts with shf. The C-terminal part of the hedgehog protein precursor displays an autoproteolysis activity that results in the cleavage of the full-length protein into two parts (N-product and C-product). In addition, the C-terminal part displays a cholesterol transferase activity that results by the covalent attachment of a cholesterol moiety to the C-terminal of the newly generated N-product. The N-product is the active species in both local and long-range signaling, whereas the C-product has no signaling activity. In terms of processing, cholesterylation is required for N-product targeting to lipid rafts and multimerization. Post-translationally, N-palmitoylation by Rasp of the hedgehog N-product, within the secretory pathway, is required for the embryonic and larval patterning activities of the hedgehog signal.

It localises to the nucleus. The protein localises to the cytoplasm. It is found in the cell membrane. The enzyme catalyses glycyl-L-cysteinyl-[protein] + cholesterol + H(+) = [protein]-C-terminal glycyl cholesterol ester + N-terminal L-cysteinyl-[protein]. Functionally, the C-terminal part of the hedgehog protein precursor displays an autoproteolysis activity that results in the cleavage of the full-length protein into two parts (N-product and C-product). In addition, the C-terminal part displays a cholesterol transferase activity that results by the covalent attachment of a cholesterol moiety to the C-terminal of the newly generated N-product. Once cleaved, the C-product has no signaling activity and diffuses from the cell. Its function is as follows. The dually lipidated hedgehog protein N-product is a morphogen which is essential for a variety of patterning events during development. Establishes the anterior-posterior axis of the embryonic segments and patterns the larval imaginal disks. Binds to the patched (ptc) receptor, which functions in association with smoothened (smo), to activate the transcription of target genes wingless (wg), decapentaplegic (dpp) and ptc. In the absence of hh, ptc represses the constitutive signaling activity of smo through fused (fu). Essential component of a signaling pathway which regulates the Duox-dependent gut immune response to bacterial uracil; required to activate Cad99C-dependent endosome formation, norpA-dependent Ca2+ mobilization and p38 MAPK, which are essential steps in the Duox-dependent production of reactive oxygen species (ROS) in response to intestinal bacterial infection. During photoreceptor differentiation, it up-regulates transcription of Ubr3, which in turn promotes the hh-signaling pathway by mediating the ubiquitination and degradation of cos. The sequence is that of Protein hedgehog from Drosophila hydei (Fruit fly).